A 457-amino-acid polypeptide reads, in one-letter code: 3-isopropylmalate dehydratase large subunit (457 aa).

The [4Fe-4S] cluster site is built by C337, C397, and C400.

The protein belongs to the aconitase/IPM isomerase family. LeuC type 1 subfamily. As to quaternary structure, heterodimer of LeuC and LeuD. [4Fe-4S] cluster is required as a cofactor.

The enzyme catalyses (2R,3S)-3-isopropylmalate = (2S)-2-isopropylmalate. The protein operates within amino-acid biosynthesis; L-leucine biosynthesis; L-leucine from 3-methyl-2-oxobutanoate: step 2/4. Its function is as follows. Catalyzes the isomerization between 2-isopropylmalate and 3-isopropylmalate, via the formation of 2-isopropylmaleate. In Oenococcus oeni (strain ATCC BAA-331 / PSU-1), this protein is 3-isopropylmalate dehydratase large subunit.